The following is an 872-amino-acid chain: Valine--tRNA ligase (872 aa).

The 'HIGH' region motif lies at 45–55 (PYPTGNLHIGN). The 'KMSKS' region signature appears at 524–528 (KMSKS). An ATP-binding site is contributed by Lys-527.

Belongs to the class-I aminoacyl-tRNA synthetase family. ValS type 2 subfamily.

It is found in the cytoplasm. The enzyme catalyses tRNA(Val) + L-valine + ATP = L-valyl-tRNA(Val) + AMP + diphosphate. Catalyzes the attachment of valine to tRNA(Val). As ValRS can inadvertently accommodate and process structurally similar amino acids such as threonine, to avoid such errors, it has a 'posttransfer' editing activity that hydrolyzes mischarged Thr-tRNA(Val) in a tRNA-dependent manner. The sequence is that of Valine--tRNA ligase from Natronomonas pharaonis (strain ATCC 35678 / DSM 2160 / CIP 103997 / JCM 8858 / NBRC 14720 / NCIMB 2260 / Gabara) (Halobacterium pharaonis).